The primary structure comprises 179 residues: Photosystem I assembly protein Ycf3 (179 aa).

TPR repeat units lie at residues Ala-29–Pro-62, Ser-66–Leu-99, and Asn-126–Asn-159.

This sequence belongs to the Ycf3 family.

Its subcellular location is the plastid. The protein resides in the chloroplast thylakoid membrane. Its function is as follows. Essential for the assembly of the photosystem I (PSI) complex. May act as a chaperone-like factor to guide the assembly of the PSI subunits. In Trieres chinensis (Marine centric diatom), this protein is Photosystem I assembly protein Ycf3.